A 470-amino-acid chain; its full sequence is TNF receptor-associated factor 4 (470 aa).

The RING-type zinc-finger motif lies at 18–58 (CPLCGKPMREPVQVSTCGHRFCDTCLQEFLSEGVFKCPEDQ). 3 TRAF-type zinc fingers span residues 102 to 154 (HLNT…EAYE), 155 to 208 (SHEG…DTIQ), and 209 to 266 (SHQY…KLAM). K263 participates in a covalent cross-link: Glycyl lysine isopeptide (Lys-Gly) (interchain with G-Cter in ubiquitin). Residues 277-309 (HLAMMCALVSRQRQELQELRRELEELSVGSDGV) adopt a coiled-coil conformation. The MATH domain maps to 307 to 462 (DGVLIWKIGS…DDAVFIRAAV (156 aa)). Residue S426 is modified to Phosphoserine.

The protein belongs to the TNF receptor-associated factor family. B subfamily. Homotrimer. Interacts with LTBR/TNFRSF3, NGFR/TNFRSF16, RPS6KB1 and TGFB1I1. Interacts with SMURF1. Interacts (via TRAF domain) with MAP3K4 (via kinase domain). Interacts with NCF1, TICAM1, IRAK1 and TRAF6, and is probably part of a complex containing TRAF4, NCF1, TICAM1, IRAK1 and TRAF6. Interacts (via MATH domain) with GP6 and GP1BB. Interacts with EGFR (via C-terminal region); this interaction promotes the formation of EGFR asymmetric dimers. Interacts with PKM; this interaction promotes PKM kinase activity. Post-translationally, polyubiquitinated, leading to its proteasomal degradation. Ubiquitinated at Lys-263 by the SCF(FBXL2) complex, leading to its degradation by the proteasome. In terms of tissue distribution, expressed in epithelial cells of thymus, dendritic cells of lymph node, and in the basal cell layer of epithelia such as epidermis, nasopharynx, respiratory tract, salivary gland, and esophagus.

The protein localises to the cytoplasm. It localises to the nucleus. Its subcellular location is the perinuclear region. It is found in the cell junction. The protein resides in the tight junction. The protein localises to the cell membrane. It localises to the cytoskeleton. It catalyses the reaction S-ubiquitinyl-[E2 ubiquitin-conjugating enzyme]-L-cysteine + [acceptor protein]-L-lysine = [E2 ubiquitin-conjugating enzyme]-L-cysteine + N(6)-ubiquitinyl-[acceptor protein]-L-lysine.. The protein operates within protein degradation; proteasomal ubiquitin-dependent pathway. Functionally, adapter protein with E3 ligase activity that is involved in many diverse biological processes including cell proliferation, migration, differentiation, DNA repair, platelet activation or apoptosis. Promotes EGFR-mediated signaling by facilitating the dimerization of EGFR and downstream AKT activation thereby promoting cell proliferation. Ubiquitinates SMURF2 through 'Lys-48'-linked ubiquitin chain leading to SMURF2 degradation through the proteasome and subsequently osteogenic differentiation. Promotes 'Lys-63'-mediated ubiquitination of CHK1 which in turn activates cell cycle arrest and activation of DNA repair. In addition, promotes an atypical 'Lys-29'-linked ubiquitination at the C-terminal end of IRS1 which is crucial for insulin-like growth factor (IGF) signal transduction. Regulates activation of NF-kappa-B in response to signaling through Toll-like receptors. Required for normal skeleton development, and for normal development of the respiratory tract. Required for activation of RPS6KB1 in response to TNF signaling. Modulates TRAF6 functions. Inhibits adipogenic differentiation by activating pyruvate kinase PKM activity and subsequently the beta-catenin signaling pathway. The protein is TNF receptor-associated factor 4 (TRAF4) of Homo sapiens (Human).